Reading from the N-terminus, the 514-residue chain is MNIQEEIKKRRTFAIISHPDAGKTTITEQLLYFGGEIREAGTVKGKKTGTFAKSDWMDIEKQRGISVTSSVMQFDYDGKRVNILDTPGHEDFSEDTYRTLMAVDAAVMVVDSAKGIEAQTKKLFEVVKHRGIPVFTFMNKLDRDGREPLDLLQELEEILGIASYPMNWPIGMGKAFEGLYDLYNQRLELYKGDERFASLEDGDKLFGSNPFYEQVKDDIELLNEAGNEFSEEAILAGELTPVFFGSALTNFGVQTFLEIFLKFAPEPHGHKKTDGEIVDPYDKDFSGFVFKIQANMDPRHRDRIAFVRIVSGEFERGMSVNLPRTGKGAKLSNVTQFMAESRENVTNAVAGDIIGVYDTGTYQVGDTLTVGKNKFEFEPLPTFTPEIFMKVSAKNVMKQKSFHKGIEQLVQEGAVQLYKNYQTGEYMLGAVGQLQFEVFKHRMEGEYNAEVVMSPMGKKTVRWIKPEDLDERMSSSRNILAKDRFDQPVFLFENDFALRWFADKYPDVELEEKM.

Positions 8-268 (KKRRTFAIIS…IFLKFAPEPH (261 aa)) constitute a tr-type G domain. Residues 17–24 (SHPDAGKT), 85–89 (DTPGH), and 139–142 (NKLD) each bind GTP.

Belongs to the TRAFAC class translation factor GTPase superfamily. Classic translation factor GTPase family. PrfC subfamily.

It localises to the cytoplasm. Functionally, increases the formation of ribosomal termination complexes and stimulates activities of RF-1 and RF-2. It binds guanine nucleotides and has strong preference for UGA stop codons. It may interact directly with the ribosome. The stimulation of RF-1 and RF-2 is significantly reduced by GTP and GDP, but not by GMP. This Streptococcus pneumoniae (strain CGSP14) protein is Peptide chain release factor 3.